Here is a 487-residue protein sequence, read N- to C-terminus: NAD(+)--arginine ADP-ribosyltransferase EFV (487 aa).

The stretch at 2–51 (SQLNKWQKELQALQKANYQETDNQLFNVYRQSLIDIKKRLKVYTENAESL) forms a coiled coil. Residues 315–487 (LDFFGQSDLQ…DNILEVTILG (173 aa)) enclose the TR mART core domain. Residues 346 to 358 (TSDA…KILR) and 394 to 400 (RGVSANE) contribute to the NAD(+) site. Active-site residues include Arg394, Ser415, and Glu463. Residue Glu463 coordinates NAD(+).

The protein localises to the secreted. The catalysed reaction is L-arginyl-[protein] + NAD(+) = N(omega)-(ADP-D-ribosyl)-L-arginyl-[protein] + nicotinamide + H(+). Its function is as follows. A probable mono(ADP-ribosyl)transferase, it may ADP-ribosylate Arg in target protein(s). Upon expression in yeast cells causes cell death. This is NAD(+)--arginine ADP-ribosyltransferase EFV from Enterococcus faecalis (strain ATCC 700802 / V583).